Reading from the N-terminus, the 349-residue chain is ATPase GET3 (349 aa).

ATP is bound at residue 26-33 (KGGVGKTT). The active site involves aspartate 57. Glutamate 242 and asparagine 269 together coordinate ATP. Residues cysteine 281 and cysteine 284 each coordinate Zn(2+).

This sequence belongs to the arsA ATPase family. Homodimer. Component of the Golgi to ER traffic (GET) complex, which is composed of GET1, GET2 and GET3. Within the complex, GET1 and GET2 form a heterotetramer which is stabilized by phosphatidylinositol binding and which binds to the GET3 homodimer. Interacts with the chloride channel protein GEF1.

It localises to the cytoplasm. Its subcellular location is the endoplasmic reticulum. The protein localises to the golgi apparatus. Functionally, ATPase required for the post-translational delivery of tail-anchored (TA) proteins to the endoplasmic reticulum. Recognizes and selectively binds the transmembrane domain of TA proteins in the cytosol. This complex then targets to the endoplasmic reticulum by membrane-bound receptors GET1 and GET2, where the tail-anchored protein is released for insertion. This process is regulated by ATP binding and hydrolysis. ATP binding drives the homodimer towards the closed dimer state, facilitating recognition of newly synthesized TA membrane proteins. ATP hydrolysis is required for insertion. Subsequently, the homodimer reverts towards the open dimer state, lowering its affinity for the GET1-GET2 receptor, and returning it to the cytosol to initiate a new round of targeting. Cooperates with the HDEL receptor ERD2 to mediate the ATP-dependent retrieval of resident ER proteins that contain a C-terminal H-D-E-L retention signal from the Golgi to the ER. Involved in low-level resistance to the oxyanions arsenite and arsenate, and in heat tolerance. The chain is ATPase GET3 from Lodderomyces elongisporus (strain ATCC 11503 / CBS 2605 / JCM 1781 / NBRC 1676 / NRRL YB-4239) (Yeast).